Consider the following 206-residue polypeptide: Small ribosomal subunit protein uS7 (206 aa).

Positions 1–19 (MSAEDTPEADADAAEESEP) are enriched in acidic residues. Residues 1 to 25 (MSAEDTPEADADAAEESEPETARAK) are disordered. S2 bears the N-acetylserine mark.

It belongs to the universal ribosomal protein uS7 family. Part of the 30S ribosomal subunit.

Its function is as follows. One of the primary rRNA binding proteins, it binds directly to 16S rRNA where it nucleates assembly of the head domain of the 30S subunit. Is located at the subunit interface close to the decoding center. The protein is Small ribosomal subunit protein uS7 of Haloarcula marismortui (strain ATCC 43049 / DSM 3752 / JCM 8966 / VKM B-1809) (Halobacterium marismortui).